A 390-amino-acid polypeptide reads, in one-letter code: Elongation factor Tu 2 (390 aa).

In terms of domain architecture, tr-type G spans K10–E203. The tract at residues G19–T26 is G1. Position 19–26 (G19–T26) interacts with GTP. A Mg(2+)-binding site is contributed by T26. Positions G60–N64 are G2. Positions D81–G84 are G3. GTP-binding positions include D81–H85 and N136–D139. Residues N136–D139 form a G4 region. The interval S173 to L175 is G5.

The protein belongs to the TRAFAC class translation factor GTPase superfamily. Classic translation factor GTPase family. EF-Tu/EF-1A subfamily. As to quaternary structure, monomer.

The protein localises to the cytoplasm. The enzyme catalyses GTP + H2O = GDP + phosphate + H(+). GTP hydrolase that promotes the GTP-dependent binding of aminoacyl-tRNA to the A-site of ribosomes during protein biosynthesis. In Streptomyces avermitilis (strain ATCC 31267 / DSM 46492 / JCM 5070 / NBRC 14893 / NCIMB 12804 / NRRL 8165 / MA-4680), this protein is Elongation factor Tu 2.